Reading from the N-terminus, the 629-residue chain is Chaperone protein DnaK (629 aa).

Residue Thr195 is modified to Phosphothreonine; by autocatalysis. 2 disordered regions span residues 514–533 (EAEQ…EKRN) and 543–629 (LGQL…KPAE). A compositionally biased stretch (basic and acidic residues) spans 555–590 (DAKDRLKAAADEAEEAVRSDDDSRIERAQKQLEEAM). Low complexity predominate over residues 595–614 (TAAQSGSQNQAGQGAQTQTG). Residues 615 to 629 (RQEDDVIDADFKPAE) show a composition bias toward basic and acidic residues.

Belongs to the heat shock protein 70 family.

Acts as a chaperone. This Deinococcus geothermalis (strain DSM 11300 / CIP 105573 / AG-3a) protein is Chaperone protein DnaK.